The following is a 1397-amino-acid chain: ABC transporter B family member 2 (1397 aa).

Residues 1–117 (MSDKSNDGGE…KLDEGEKKEG (117 aa)) form a disordered region. Acidic residues predominate over residues 24–39 (IDDENNNDINNQDDNE). Residues 37–69 (DNENNNNNNNNKNSDDNEENLKDYKNKKEDFGN) are a coiled coil. Composition is skewed to basic and acidic residues over residues 49–79 (NSDD…DDRP) and 107–117 (KKLDEGEKKEG). 5 helical membrane-spanning segments follow: residues 137–157 (ILLM…MPAI), 191–211 (FIYI…FWML), 273–293 (FICG…VIFA), 369–389 (GIGI…SFWY), and 407–427 (WQGG…MALG). Residues 140–438 (MIIGTIGALA…ASPNVASFAN (299 aa)) enclose the ABC transmembrane type-1 1 domain. Residues 474-710 (IEYRNIGFSY…NGVYTQLVNR (237 aa)) form the ABC transporter 1 domain. 509–516 (GDSGGGKS) is an ATP binding site. Disordered regions lie at residues 710–744 (RQQK…SSIS) and 763–783 (GLVN…PQEK). The segment covering 735–744 (NNNIGPSSIS) has biased composition (low complexity). The next 6 helical transmembrane spans lie at 801–821 (FLIG…FSII), 846–866 (LWFI…IYCF), 922–942 (LGLL…AFVS), 948–968 (LVVL…MDFF), 1028–1048 (GLSF…TYWY), and 1101–1121 (VFFA…FMPD). Residues 801 to 1124 (FLIGLVGATL…SMAFMPDLGK (324 aa)) form the ABC transmembrane type-1 2 domain. Residues 1159–1395 (IEFKDIKFSY…NGFYAELVSR (237 aa)) form the ABC transporter 2 domain. ATP is bound at residue 1194–1201 (GNSGGGKS).

Belongs to the ABC transporter superfamily. ABCB family. Multidrug resistance exporter (TC 3.A.1.201) subfamily.

The protein localises to the membrane. This is ABC transporter B family member 2 (abcB2) from Dictyostelium discoideum (Social amoeba).